The primary structure comprises 145 residues: HTH-type transcriptional regulator MhqR (145 aa).

The 133-residue stretch at 5–137 (SLKLFIVLSR…CTEMLKRVGL (133 aa)) folds into the HTH marR-type domain. Residues 51 to 74 (LQQIGDKILLASGSITYVVDKLEQ) constitute a DNA-binding region (H-T-H motif).

In terms of biological role, negatively regulates mhqA, mhqED, mhqNOP, and azoR2 which may contribute to the degradation of aromatic compounds. The chain is HTH-type transcriptional regulator MhqR (mhqR) from Bacillus subtilis (strain 168).